A 381-amino-acid polypeptide reads, in one-letter code: MKKSKHLKRPYLKRSHLKHSDKASSFKGLLKKEDNVISLENFKPKESEDLLENFSNKKDMQELLGLLNQFILQSYKVEKEFKDYKALYEWVIEILPQAIWVVNENGSFFYKNSLANQSHEVFNKAKLENFNTEIEHENKSYLVQQNSIQGKQIITATDISAQKRQERLASMGKISAHLAHEIRNPVGSISLLASVLLKHANEKTKPIVVELQKALWRVERIIKATLLFSKGIQANRTKQSLKTLESDLKEALNCYTYSKDIDFLFNFSDEEGFFDFDLMGIVLQNFLYNAIDAIEALEESEQGQVKIEAFIQNEFIVFTIIDNGKEVENKSALFEPFETTKLKGNGLGLALSLQVVKAHEGSIALLENQEKTFEIKILNAS.

One can recognise a Histidine kinase domain in the interval 177-381 (HLAHEIRNPV…TFEIKILNAS (205 aa)). Histidine 180 is modified (phosphohistidine; by autocatalysis).

Interacts (via its C-terminal kinase domain) with FlhA (via N-terminus). Post-translationally, autophosphorylated.

It catalyses the reaction ATP + protein L-histidine = ADP + protein N-phospho-L-histidine.. Member of the two-component regulatory system FlgR/FlgS that induces the transcriptional induction of the genes needed in motility and flagellar biogenesis. Also plays an essential role in bacterial survival at pH 2.5 independently of FlgR. Functions as a sensor protein kinase which is autophosphorylated at a histidine residue and transfers its phosphate group to the conserved aspartic acid residue in the regulatory domain of FlgR. In turn, FlgR functions as a transcriptional regulator initiating transcription from RpoN-dependent promoters. This Helicobacter pylori (strain ATCC 700392 / 26695) (Campylobacter pylori) protein is Sensor histidine kinase FlgS (flgS).